The chain runs to 485 residues: Glutamyl-tRNA(Gln) amidotransferase subunit A (485 aa).

Active-site charge relay system residues include Lys79 and Ser154. The active-site Acyl-ester intermediate is the Ser178.

The protein belongs to the amidase family. GatA subfamily. Heterotrimer of A, B and C subunits.

The catalysed reaction is L-glutamyl-tRNA(Gln) + L-glutamine + ATP + H2O = L-glutaminyl-tRNA(Gln) + L-glutamate + ADP + phosphate + H(+). In terms of biological role, allows the formation of correctly charged Gln-tRNA(Gln) through the transamidation of misacylated Glu-tRNA(Gln) in organisms which lack glutaminyl-tRNA synthetase. The reaction takes place in the presence of glutamine and ATP through an activated gamma-phospho-Glu-tRNA(Gln). The sequence is that of Glutamyl-tRNA(Gln) amidotransferase subunit A from Clostridium botulinum (strain Alaska E43 / Type E3).